The following is a 596-amino-acid chain: MTIMTMIMKMAPSKSALIRFNLVLLGFSFLLYTAIFFHPSSSVYFSSGASFVGCSFRDCTPKVVRGVKMQELVEENEINKKDLLTASNQTKLEAPSFMEEILTRGLGKTKIGMVNMEECDLTNWKRYGETVHIHFERVSKLFKWQDLFPEWIDEEEETEVPTCPEIPMPDFESLEKLDLVVVKLPCNYPEEGWRREVLRLQVNLVAANLAAKKGKTDWRWKSKVLFWSKCQPMIEIFRCDDLEKREADWWLYRPEVVRLQQRLSLPVGSCNLALPLWAPQGVDKVYDLTKIEAETKRPKREAYVTVLHSSESYVCGAITLAQSLLQTNTKRDLILLHDDSISITKLRALAAAGWKLRRIIRIRNPLAEKDSYNEYNYSKFRLWQLTDYDKVIFIDADIIVLRNLDLLFHFPQMSATGNDVWIYNSGIMVIEPSNCTFTTIMSQRSEIVSYNGGDQGYLNEIFVWWHRLPRRVNFLKNFWSNTTKERNIKNNLFAAEPPQVYAVHYLGWKPWLCYRDYDCNYDVDEQLVYASDAAHVRWWKVHDSMDDALQKFCRLTKKRRTEINWERRKARLRGSTDYHWKINVTDPRRRRSYLIG.

Residues 17–37 (LIRFNLVLLGFSFLLYTAIFF) traverse the membrane as a helical; Signal-anchor for type II membrane protein segment. 2 residues coordinate Mn(2+): D395 and D397. Substrate is bound by residues 395–397 (DAD), 424–426 (NSG), 451–455 (NGGDQ), and 504–509 (HYLGWK). H504 is a binding site for Mn(2+).

The protein belongs to the glycosyltransferase 8 family. Glycogenin subfamily. Mn(2+) is required as a cofactor.

The protein resides in the golgi apparatus membrane. Functionally, glycosyltransferase required for the addition of both glucuronic acid and 4-O-methylglucuronic acid branches to xylan in stem cell walls. In association with GUX1, is responsible for almost all of the substitutions of the xylan backbone in stem glucuronoxylan. The chain is UDP-glucuronate:xylan alpha-glucuronosyltransferase 2 (GUX2) from Arabidopsis thaliana (Mouse-ear cress).